Consider the following 193-residue polypeptide: Protein PapJ (193 aa).

An N-terminal signal peptide occupies residues 1-27; the sequence is MVVNKTTAVLYLIALSLSGFIHTFLRA.

Its subcellular location is the periplasm. Functionally, this protein maintains pilus integrity and thus is an important participant in pilus assembly. It may function as molecular chaperone directly or indirectly in the correct assembly of PapA subunits. In Escherichia coli, this protein is Protein PapJ (papJ).